The following is a 114-amino-acid chain: Nucleoid-associated protein Amet_4780 (114 aa).

The interval 23–42 is disordered; that stretch reads QKMQKDMEKTQAALEEKEVE. Positions 25–42 are enriched in basic and acidic residues; that stretch reads MQKDMEKTQAALEEKEVE.

It belongs to the YbaB/EbfC family. Homodimer.

Its subcellular location is the cytoplasm. It is found in the nucleoid. Binds to DNA and alters its conformation. May be involved in regulation of gene expression, nucleoid organization and DNA protection. The chain is Nucleoid-associated protein Amet_4780 from Alkaliphilus metalliredigens (strain QYMF).